The sequence spans 74 residues: MRFYIAFFFLLLAADMALSFEIGNSEELERLSMVYGEVESERGCTHGSCENGETCCDGWRCRYTGRAVPFMCVP.

An N-terminal signal peptide occupies residues 1–19 (MRFYIAFFFLLLAADMALS). A propeptide spanning residues 20–30 (FEIGNSEELER) is cleaved from the precursor. Cystine bridges form between cysteine 44–cysteine 56, cysteine 49–cysteine 61, and cysteine 55–cysteine 72.

Expressed by the venom gland.

The protein localises to the secreted. In Agelena orientalis (Funnel-web spider), this protein is U6-agatoxin-Ao1a.